The primary structure comprises 267 residues: Proenkephalin-A (267 aa).

Residues 1–24 (MARFLTLCTWLLLLGPGLLATVRA) form the signal peptide. Cystine bridges form between C26–C48, C30–C52, and C33–C65. Residues 163 to 175 (TGDNRERSHHQDG) show a composition bias toward basic and acidic residues. A disordered region spans residues 163-182 (TGDNRERSHHQDGSDNEEEV). 2 propeptides span residues 196–207 (SPQLEDEAKELQ) and 217–227 (VGRPEWWMDYQ). A Phosphoserine modification is found at S251.

This sequence belongs to the opioid neuropeptide precursor family. Post-translationally, proenkephalin-A is cleaved by CTSL to generate Met-enkephalin. Processed and degraded by ACE. In terms of processing, probably cleaved by ACE. Post-translationally, processed by ACE to generate Met-enkephalin in the nucleus accumbens of the brain. The N-terminal domain contains 6 conserved cysteines thought to be involved in disulfide bonding and/or processing.

The protein resides in the cytoplasmic vesicle. Its subcellular location is the secretory vesicle. It is found in the chromaffin granule lumen. It localises to the secreted. Neuropeptide that competes with and mimic the effects of opiate drugs. They play a role in a number of physiologic functions, including pain perception and responses to stress. In terms of biological role, met-enkephalin-Arg-Phe neuropeptide acts as a strong ligand of Mu-type opioid receptor OPRM1. Met-enkephalin-Arg-Phe-binding to OPRM1 in the nucleus accumbens of the brain increases activation of OPRM1, leading to long-term synaptic depression of glutamate release. Functionally, increases glutamate release in the striatum and decreases GABA concentration in the striatum. Its function is as follows. Increases glutamate release in the striatum. The protein is Proenkephalin-A of Homo sapiens (Human).